A 428-amino-acid polypeptide reads, in one-letter code: Enolase (428 aa).

Residue Q165 participates in (2R)-2-phosphoglycerate binding. E207 acts as the Proton donor in catalysis. Mg(2+) is bound by residues D244, E285, and D312. (2R)-2-phosphoglycerate contacts are provided by K337, R366, S367, and K388. K337 (proton acceptor) is an active-site residue.

Belongs to the enolase family. In terms of assembly, component of the RNA degradosome, a multiprotein complex involved in RNA processing and mRNA degradation. It depends on Mg(2+) as a cofactor.

The protein localises to the cytoplasm. The protein resides in the secreted. It is found in the cell surface. It catalyses the reaction (2R)-2-phosphoglycerate = phosphoenolpyruvate + H2O. It functions in the pathway carbohydrate degradation; glycolysis; pyruvate from D-glyceraldehyde 3-phosphate: step 4/5. Its function is as follows. Catalyzes the reversible conversion of 2-phosphoglycerate (2-PG) into phosphoenolpyruvate (PEP). It is essential for the degradation of carbohydrates via glycolysis. The protein is Enolase of Coxiella burnetii (strain Dugway 5J108-111).